The primary structure comprises 201 residues: MIGFIRGLLVAKRAPSLLIDVQGLGYELDAPMSTFYNLPEIGAEVRLYTHLQIREDAHSLFGFGTEAERGLFRSLIRVSGIGAKLALAILSGISVDDFRACVERQDSARLVRLPGIGKKTAERLIIELRDRLDIGVPSLAPASFAGGAAPLPAADPADEAVSALIALGFKPQEANTLVARQAAEGRSAEDLIRAALQSAVR.

The segment at 1-64 is domain I; sequence MIGFIRGLLV…EDAHSLFGFG (64 aa). The interval 65–143 is domain II; it reads TEAERGLFRS…IGVPSLAPAS (79 aa). The segment at 144-153 is flexible linker; that stretch reads FAGGAAPLPA. The segment at 153–201 is domain III; it reads AADPADEAVSALIALGFKPQEANTLVARQAAEGRSAEDLIRAALQSAVR.

The protein belongs to the RuvA family. As to quaternary structure, homotetramer. Forms an RuvA(8)-RuvB(12)-Holliday junction (HJ) complex. HJ DNA is sandwiched between 2 RuvA tetramers; dsDNA enters through RuvA and exits via RuvB. An RuvB hexamer assembles on each DNA strand where it exits the tetramer. Each RuvB hexamer is contacted by two RuvA subunits (via domain III) on 2 adjacent RuvB subunits; this complex drives branch migration. In the full resolvosome a probable DNA-RuvA(4)-RuvB(12)-RuvC(2) complex forms which resolves the HJ.

The protein localises to the cytoplasm. Functionally, the RuvA-RuvB-RuvC complex processes Holliday junction (HJ) DNA during genetic recombination and DNA repair, while the RuvA-RuvB complex plays an important role in the rescue of blocked DNA replication forks via replication fork reversal (RFR). RuvA specifically binds to HJ cruciform DNA, conferring on it an open structure. The RuvB hexamer acts as an ATP-dependent pump, pulling dsDNA into and through the RuvAB complex. HJ branch migration allows RuvC to scan DNA until it finds its consensus sequence, where it cleaves and resolves the cruciform DNA. The polypeptide is Holliday junction branch migration complex subunit RuvA (Methylococcus capsulatus (strain ATCC 33009 / NCIMB 11132 / Bath)).